The chain runs to 86 residues: Large ribosomal subunit protein bL27 (86 aa).

It belongs to the bacterial ribosomal protein bL27 family.

The sequence is that of Large ribosomal subunit protein bL27 from Koribacter versatilis (strain Ellin345).